Reading from the N-terminus, the 259-residue chain is NAP1-related protein 1 (259 aa).

The span at 1–15 (MAAAEQKGKKPRTDG) shows a compositional bias: basic and acidic residues. A disordered region spans residues 1–20 (MAAAEQKGKKPRTDGAEAEP). The stretch at 21 to 62 (VDAALLQSIEKLQEIQDEIEKVNEEACDKVLELEQKYNEVRR) forms a coiled coil. Residues 228-259 (ELLDDDDEVSDDDDEEEDDEDQGEGEEDGEEN) form a disordered region.

It belongs to the nucleosome assembly protein (NAP) family.

It is found in the nucleus. The protein localises to the cytoplasm. Its function is as follows. Acts as a histone H2A/H2B chaperone in nucleosome assembly. This chain is NAP1-related protein 1, found in Oryza sativa subsp. indica (Rice).